We begin with the raw amino-acid sequence, 442 residues long: 3-phosphoshikimate 1-carboxyvinyltransferase (442 aa).

3-phosphoshikimate-binding residues include K25, S26, and R30. Residue K25 participates in phosphoenolpyruvate binding. 2 residues coordinate phosphoenolpyruvate: G97 and R125. 3-phosphoshikimate is bound by residues S170, Q172, D323, and K350. Q172 serves as a coordination point for phosphoenolpyruvate. The active-site Proton acceptor is the D323. Residues R354 and R399 each contribute to the phosphoenolpyruvate site.

It belongs to the EPSP synthase family. In terms of assembly, monomer.

It localises to the cytoplasm. The enzyme catalyses 3-phosphoshikimate + phosphoenolpyruvate = 5-O-(1-carboxyvinyl)-3-phosphoshikimate + phosphate. It functions in the pathway metabolic intermediate biosynthesis; chorismate biosynthesis; chorismate from D-erythrose 4-phosphate and phosphoenolpyruvate: step 6/7. In terms of biological role, catalyzes the transfer of the enolpyruvyl moiety of phosphoenolpyruvate (PEP) to the 5-hydroxyl of shikimate-3-phosphate (S3P) to produce enolpyruvyl shikimate-3-phosphate and inorganic phosphate. This chain is 3-phosphoshikimate 1-carboxyvinyltransferase, found in Bartonella quintana (strain Toulouse) (Rochalimaea quintana).